The chain runs to 509 residues: Light-independent protochlorophyllide reductase subunit B (509 aa).

Position 36 (Asp36) interacts with [4Fe-4S] cluster. Asp298 functions as the Proton donor in the catalytic mechanism. 433-434 serves as a coordination point for substrate; that stretch reads GM.

It belongs to the ChlB/BchB/BchZ family. Protochlorophyllide reductase is composed of three subunits; ChlL, ChlN and ChlB. Forms a heterotetramer of two ChlB and two ChlN subunits. The cofactor is [4Fe-4S] cluster.

Its subcellular location is the plastid. The protein localises to the chloroplast. The catalysed reaction is chlorophyllide a + oxidized 2[4Fe-4S]-[ferredoxin] + 2 ADP + 2 phosphate = protochlorophyllide a + reduced 2[4Fe-4S]-[ferredoxin] + 2 ATP + 2 H2O. The protein operates within porphyrin-containing compound metabolism; chlorophyll biosynthesis (light-independent). Functionally, component of the dark-operative protochlorophyllide reductase (DPOR) that uses Mg-ATP and reduced ferredoxin to reduce ring D of protochlorophyllide (Pchlide) to form chlorophyllide a (Chlide). This reaction is light-independent. The NB-protein (ChlN-ChlB) is the catalytic component of the complex. In Ephedra altissima (High-climbing jointfir), this protein is Light-independent protochlorophyllide reductase subunit B.